The primary structure comprises 409 residues: Broad specificity amino-acid racemase (409 aa).

A signal peptide spans 1 to 24; that stretch reads MPFRRTLLAASLALLITGQAPLYA. An intrachain disulfide couples Cys-71 to Cys-97. Lys-75 acts as the Proton acceptor in catalysis. An N6-(pyridoxal phosphate)lysine modification is found at Lys-75. Arg-174 provides a ligand contact to substrate. Tyr-301 acts as the Proton acceptor in catalysis. Substrate is bound at residue Met-349.

The protein belongs to the alanine racemase family. Bsr subfamily. It depends on pyridoxal 5'-phosphate as a cofactor.

The protein localises to the periplasm. It carries out the reaction an L-alpha-amino acid = a D-alpha-amino acid. The enzyme catalyses L-lysine = D-lysine. The catalysed reaction is L-arginine = D-arginine. It catalyses the reaction L-glutamine = D-glutamine. Its function is as follows. Amino-acid racemase able to utilize a broad range of substrates. Reversibly racemizes 9 of the 19 natural chiral amino acids known, including both positively charged amino acids (Lys, Arg and His) and non-beta-branched aliphatic amino acids (Ala, Leu, Met, Ser, Gln and Asn). Among these amino acids, activity is the highest with lysine and arginine, and poor or very poor with the others. Plays a primary role in the catabolism of basic amino acid, that allows P.putida strain KT2440 to grow on L-Lys and L-Arg as the sole source of carbon and nitrogen, through conversion to their respective D-enantiomers. The sequence is that of Broad specificity amino-acid racemase from Pseudomonas putida (strain ATCC 47054 / DSM 6125 / CFBP 8728 / NCIMB 11950 / KT2440).